The following is a 251-amino-acid chain: Bidirectional sugar transporter SWEET4 (251 aa).

Residues 1–12 (MVNATVARNIAG) are Extracellular-facing. Residue asparagine 3 is glycosylated (N-linked (GlcNAc...) asparagine). One can recognise a MtN3/slv 1 domain in the interval 12–96 (GICGNVISLF…LAIFFFFSPT (85 aa)). A helical membrane pass occupies residues 13–33 (ICGNVISLFLFLSPIPTFITI). Residues 34–45 (YKKKKVEEYKAD) are Cytoplasmic-facing. The helical transmembrane segment at 46-66 (PYLATVLNCALWVFYGLPMVQ) threads the bilayer. Topologically, residues 67 to 72 (PDSLLV) are extracellular. A helical transmembrane segment spans residues 73-93 (ITINGTGLAIELVYLAIFFFF). Over 94-103 (SPTSRKVKVG) the chain is Cytoplasmic. A helical transmembrane segment spans residues 104-124 (LWLIGEMVFVGIVATCTLLLF). The Extracellular portion of the chain corresponds to 125–132 (HTHNQRSS). The helical transmembrane segment at 133–153 (FVGIFCVIFVSLMYIAPLTIM) threads the bilayer. In terms of domain architecture, MtN3/slv 2 spans 133-216 (FVGIFCVIFV…LILYACYYKT (84 aa)). Topologically, residues 154 to 163 (SKVIKTKSVK) are cytoplasmic. The chain crosses the membrane as a helical span at residues 164–186 (YMPFSLSLANFLNGVVWVIYALI). Residues 187-190 (KFDL) lie on the Extracellular side of the membrane. Residues 191–213 (FILIGNGLGTVSGAVQLILYACY) traverse the membrane as a helical segment. At 214–251 (YKTTPKDDEDEEDEENLSKVNSQLQLSGNSGQAKRVSA) the chain is on the cytoplasmic side. Positions 220–251 (DDEDEEDEENLSKVNSQLQLSGNSGQAKRVSA) are disordered. Over residues 231–245 (SKVNSQLQLSGNSGQ) the composition is skewed to polar residues.

It belongs to the SWEET sugar transporter family. As to quaternary structure, forms homooligomers and heterooligomers with SWEET8 and SWEET17.

It localises to the cell membrane. Its function is as follows. Mediates both low-affinity uptake and efflux of sugar across the plasma membrane. This chain is Bidirectional sugar transporter SWEET4, found in Arabidopsis thaliana (Mouse-ear cress).